Consider the following 443-residue polypeptide: Ribosomal protein uS12 methylthiotransferase RimO (443 aa).

The 111-residue stretch at 6-116 (PRVGMISLGC…VVNAVHDVVP (111 aa)) folds into the MTTase N-terminal domain. Residues Cys15, Cys51, Cys80, Cys149, Cys153, and Cys156 each contribute to the [4Fe-4S] cluster site. The 239-residue stretch at 135–373 (LTPRHYAYLK…MAHQQAISAA (239 aa)) folds into the Radical SAM core domain. The region spanning 376–443 (QMKIGKEIEV…DEYDLWAEML (68 aa)) is the TRAM domain.

Belongs to the methylthiotransferase family. RimO subfamily. The cofactor is [4Fe-4S] cluster.

Its subcellular location is the cytoplasm. It catalyses the reaction L-aspartate(89)-[ribosomal protein uS12]-hydrogen + (sulfur carrier)-SH + AH2 + 2 S-adenosyl-L-methionine = 3-methylsulfanyl-L-aspartate(89)-[ribosomal protein uS12]-hydrogen + (sulfur carrier)-H + 5'-deoxyadenosine + L-methionine + A + S-adenosyl-L-homocysteine + 2 H(+). In terms of biological role, catalyzes the methylthiolation of an aspartic acid residue of ribosomal protein uS12. The chain is Ribosomal protein uS12 methylthiotransferase RimO from Pseudomonas syringae pv. tomato (strain ATCC BAA-871 / DC3000).